The following is a 766-amino-acid chain: Probable beta-glucosidase K (766 aa).

Asn19 carries an N-linked (GlcNAc...) asparagine glycan. Asp196 is an active-site residue. Residues Asn288, Asn453, and Asn748 are each glycosylated (N-linked (GlcNAc...) asparagine). Residues 369 to 528 enclose the PA14 domain; that stretch reads EGQPGLGMRF…DPERAIARAV (160 aa). The segment at 726–766 is disordered; that stretch reads LGRRGRSGSSPAVYRGRSNNVVNRTSHQGAQRISKGGFAAR. Residues 742–756 show a composition bias toward polar residues; it reads RSNNVVNRTSHQGAQ.

The protein belongs to the glycosyl hydrolase 3 family.

The protein resides in the secreted. The catalysed reaction is Hydrolysis of terminal, non-reducing beta-D-glucosyl residues with release of beta-D-glucose.. It participates in glycan metabolism; cellulose degradation. In terms of biological role, beta-glucosidases are one of a number of cellulolytic enzymes involved in the degradation of cellulosic biomass. Catalyzes the last step releasing glucose from the inhibitory cellobiose. This chain is Probable beta-glucosidase K (bglK), found in Aspergillus fumigatus (strain CBS 144.89 / FGSC A1163 / CEA10) (Neosartorya fumigata).